Reading from the N-terminus, the 1405-residue chain is DNA-directed RNA polymerase subunit beta' (1405 aa).

Zn(2+) contacts are provided by cysteine 70, cysteine 72, cysteine 85, and cysteine 88. Mg(2+) is bound by residues aspartate 460, aspartate 462, and aspartate 464. Zn(2+) contacts are provided by cysteine 814, cysteine 888, cysteine 895, and cysteine 898.

This sequence belongs to the RNA polymerase beta' chain family. In terms of assembly, the RNAP catalytic core consists of 2 alpha, 1 beta, 1 beta' and 1 omega subunit. When a sigma factor is associated with the core the holoenzyme is formed, which can initiate transcription. Requires Mg(2+) as cofactor. It depends on Zn(2+) as a cofactor.

The catalysed reaction is RNA(n) + a ribonucleoside 5'-triphosphate = RNA(n+1) + diphosphate. Its function is as follows. DNA-dependent RNA polymerase catalyzes the transcription of DNA into RNA using the four ribonucleoside triphosphates as substrates. This Shewanella woodyi (strain ATCC 51908 / MS32) protein is DNA-directed RNA polymerase subunit beta'.